A 57-amino-acid polypeptide reads, in one-letter code: DNA gyrase inhibitor YacG (57 aa).

Zn(2+)-binding residues include C10, C13, C25, and C29.

It belongs to the DNA gyrase inhibitor YacG family. As to quaternary structure, interacts with GyrB. Zn(2+) serves as cofactor.

In terms of biological role, inhibits all the catalytic activities of DNA gyrase by preventing its interaction with DNA. Acts by binding directly to the C-terminal domain of GyrB, which probably disrupts DNA binding by the gyrase. The protein is DNA gyrase inhibitor YacG of Brucella abortus (strain 2308).